The sequence spans 200 residues: Large ribosomal subunit protein uL4 (200 aa).

Residues 43–71 (RAQKTRAEVSGSGKKPWRQKGTGRARSGD) form a disordered region.

This sequence belongs to the universal ribosomal protein uL4 family. Part of the 50S ribosomal subunit.

One of the primary rRNA binding proteins, this protein initially binds near the 5'-end of the 23S rRNA. It is important during the early stages of 50S assembly. It makes multiple contacts with different domains of the 23S rRNA in the assembled 50S subunit and ribosome. Functionally, forms part of the polypeptide exit tunnel. The chain is Large ribosomal subunit protein uL4 from Mannheimia succiniciproducens (strain KCTC 0769BP / MBEL55E).